Consider the following 137-residue polypeptide: UPF0146 protein MJ0688 (137 aa).

It belongs to the UPF0146 family.

This is UPF0146 protein MJ0688 from Methanocaldococcus jannaschii (strain ATCC 43067 / DSM 2661 / JAL-1 / JCM 10045 / NBRC 100440) (Methanococcus jannaschii).